A 473-amino-acid chain; its full sequence is H(+)/Cl(-) exchange transporter ClcA (473 aa).

The Cytoplasmic portion of the chain corresponds to 1–32 (MKTDTSTFLAQQIVRLRRRDQIRRLMQRDKTP). A helical membrane pass occupies residues 33-69 (LAILFMAAVVGTLTGLVGVAFEKAVSWVQNMRIGALV). Residues 70–76 (QVADHAF) are Periplasmic-facing. A helical transmembrane segment spans residues 77-100 (LLWPLAFILSALLAMVGYFLVRKF). The Selectivity filter part_1 signature appears at 106-110 (GSGIP). Residue S107 coordinates chloride. The segment at residues 109–116 (IPEIEGAL) is an intramembrane region (helical). Over 117 to 123 (EELRPVR) the chain is Cytoplasmic. A run of 2 helical transmembrane segments spans residues 124–141 (WWRV…TLGA) and 148–166 (EGPT…LDVF). Residues 146–150 (GREGP) carry the Selectivity filter part_2 motif. Over 167–176 (RMRSAEARHT) the chain is Cytoplasmic. 2 consecutive intramembrane regions (helical) follow at residues 177–189 (LLAT…LSAA) and 193–201 (PLAGILFII). The Cytoplasmic segment spans residues 202-214 (EEMRPQFRYNLIS). The chain crosses the membrane as a helical span at residues 215–232 (IKAVFTGVIMSSIVFRIF). Over 233–252 (NGEAPIIEVGKLSDAPVNTL) the chain is Periplasmic. The helical transmembrane segment at 253 to 281 (WLYLILGIIFGCVGPVFNSLVLRTQDMFQ) threads the bilayer. Residues 282-287 (RFHGGE) are Cytoplasmic-facing. A helical membrane pass occupies residues 288 to 309 (IKKWVLMGGAIGGLCGILGLIE). The Periplasmic segment spans residues 310–329 (PEAAGGGFNLIPIAAAGNFS). 2 helical membrane passes run 330–349 (VGLL…LCFS) and 355–376 (GIFA…MAAA). The Selectivity filter part_3 motif lies at 355-359 (GIFAP). Chloride is bound by residues I356 and F357. Residues 377–386 (VLFPQYHLEA) are Periplasmic-facing. Positions 387 to 401 (GTFAIAGMGALMAAS) form an intramembrane region, helical. An intramembrane region (note=Loop between two helices) is located at residues 402 to 404 (VRA). The helical intramembrane region spans 405 to 416 (PLTGIVLVLEMT). Residues 417 to 421 (DNYQL) constitute an intramembrane region (note=Loop between two helices). Residues 422 to 438 (ILPMIITCLGATLLAQF) traverse the membrane as a helical segment. Residues 439–473 (LGGKPLYSTILARTLAKQDAEQAAKSQNAPAGENT) lie on the Cytoplasmic side of the membrane. Residue Y445 participates in chloride binding.

It belongs to the chloride channel (TC 2.A.49) family. ClcA subfamily. Homodimer.

The protein localises to the cell inner membrane. The enzyme catalyses 2 chloride(in) + H(+)(out) = 2 chloride(out) + H(+)(in). In terms of biological role, proton-coupled chloride transporter. Functions as antiport system and exchanges two chloride ions for 1 proton. Probably acts as an electrical shunt for an outwardly-directed proton pump that is linked to amino acid decarboxylation, as part of the extreme acid resistance (XAR) response. In Salmonella gallinarum (strain 287/91 / NCTC 13346), this protein is H(+)/Cl(-) exchange transporter ClcA.